The chain runs to 122 residues: MLAGCFNLSGYSYKCNSLLHHQLPITNYQFSNHQIKSSGEVMYQEDIYNSQNVKKINNEQVDQIIKSIIAGKYSWACVLLLRYSGYNPIDYIPYRTYIRLLKNNCLGGKNQEGRNDSQEVLI.

The protein belongs to the HetP family. In bacterial two-hybrid assays interacts robustly with itself, Asl1930, Alr2902 and HetR and weakly with HetP.

Delays heterocyst differentiation and commitment when nitrogen is limiting. Interplay between the 4 HetP paralogs controls the timing of commitment to heterocyst formation and its duration. Epistatic analysis show that the 3 paralogs act upstream of hetP to delay commitment (asl1930, alr3234) or inhibit development (alr2902). Asl1930 and Alr3234 must also attenuate the activity of Alr2902. Ectopic expression does not complement a hetP deletion. This chain is HetP-like commitment protein Alr3234, found in Nostoc sp. (strain PCC 7120 / SAG 25.82 / UTEX 2576).